Consider the following 872-residue polypeptide: Protein SEY1 (872 aa).

At methionine 1–glutamine 749 the chain is on the cytoplasmic side. One can recognise a GB1/RHD3-type G domain in the interval glycine 49–tyrosine 294. Glycine 59–serine 66 lines the GTP pocket. The stretch at serine 482–arginine 504 forms a coiled coil. The disordered stretch occupies residues leucine 676–aspartate 704. Acidic residues predominate over residues alanine 690–aspartate 704. The helical transmembrane segment at valine 750–leucine 770 threads the bilayer. Over arginine 771 to proline 773 the chain is Lumenal. The chain crosses the membrane as a helical span at residues alanine 774–leucine 794. The Cytoplasmic portion of the chain corresponds to tryptophan 795–phenylalanine 872. A disordered region spans residues asparagine 849–phenylalanine 872.

This sequence belongs to the TRAFAC class dynamin-like GTPase superfamily. GB1/RHD3 GTPase family. RHD3 subfamily.

Its subcellular location is the endoplasmic reticulum membrane. Functionally, cooperates with the reticulon proteins and tubule-shaping DP1 family proteins to generate and maintain the structure of the tubular endoplasmic reticulum network. Has GTPase activity, which is required for its function in ER organization. In Paracoccidioides brasiliensis (strain Pb03), this protein is Protein SEY1.